A 340-amino-acid polypeptide reads, in one-letter code: Protein B17 (340 aa).

The protein belongs to the orthopoxvirus B17 protein family.

The chain is Protein B17 from Vaccinia virus (strain Western Reserve) (VACV).